The chain runs to 861 residues: Protein argonaute-4 (861 aa).

Residues 219–338 form the PAZ domain; the sequence is PIIEFMCEVL…LPLEVCNIVA (120 aa). The Piwi domain maps to 509-820; sequence LIVVILPGKT…VAFRARYHLV (312 aa). Positions 825–846 are disordered; it reads DSAEGSHVSGQSNGRDPQALAK.

Belongs to the argonaute family. Ago subfamily. In terms of assembly, interacts with EIF4B, IMP8, PRMT5, TNRC6A and TNRC6B. Interacts with ZFP36. In terms of processing, ubiquitinated on surface-exposed lysines by a SCF-like E3 ubiquitin-protein ligase complex containing ZSWIM8 during target-directed microRNA degradation (TDMD), a process that mediates degradation of microRNAs (miRNAs). Ubiquitination by the SCF-like E3 ubiquitin-protein ligase complex containing ZSWIM8 leads to its subsequent degradation, thereby exposing miRNAs for degradation. ZSWIM8 recognizes and binds AGO4 when it is engaged with a TDMD target.

It localises to the cytoplasm. The protein resides in the P-body. Its function is as follows. Required for RNA-mediated gene silencing (RNAi). Binds to short RNAs such as microRNAs (miRNAs) and represses the translation of mRNAs which are complementary to them. Lacks endonuclease activity and does not appear to cleave target mRNAs. The protein is Protein argonaute-4 (Ago4) of Mus musculus (Mouse).